A 305-amino-acid chain; its full sequence is Tetraspanin-12 (305 aa).

Residues 1–12 (MAREDSVKCLRC) are Cytoplasmic-facing. 2 S-palmitoyl cysteine lipidation sites follow: Cys-9 and Cys-12. A helical membrane pass occupies residues 13–33 (LLYALNLLFWLMSISVLAVSA). Over 34–59 (WMRDYLNNVLTLTAETRVEEAVILTY) the chain is Extracellular. The chain crosses the membrane as a helical span at residues 60–80 (FPVVHPVMIAVCCFLIIVGML). Residues 81–89 (GYCGTVKRN) are Cytoplasmic-facing. Residue Cys-83 is the site of S-palmitoyl cysteine attachment. A helical transmembrane segment spans residues 90–110 (LLLLAWYFGTLLVIFCVELAC). At 111 to 224 (GVWTYEQEVM…RGTKQLQVLR (114 aa)) the chain is on the extracellular side. The helical transmembrane segment at 225–245 (FLGISIGVTQILAMILTITLL) threads the bilayer. Residues 246-305 (WALYYDRREPGTDQMLSLKNDTSQHLSCHSVELLKPSLSRIFEHTSMANSFNTHFEMEEL) lie on the Cytoplasmic side of the membrane.

It belongs to the tetraspanin (TM4SF) family. As to quaternary structure, interacts (when palmitoylated) with ADAM10. Interacts with MMP14/MT1-MMP. Component of a complex, at least composed of TSPAN12, FZD4 and norrin (NDP). Palmitoylated; required for interaction with ADAM10. In terms of tissue distribution, expressed in the neonatal retinal vasculature but not other retinal tissues. Also detected in the neonatal meningeal vasculature and in nonvascular cell types, such as the smooth muscle cells in the neonatal intestine.

The protein localises to the cell membrane. Its function is as follows. Regulator of cell surface receptor signal transduction. Acts as a regulator of membrane proteinases such as ADAM10 and MMP14/MT1-MMP. Activates ADAM10-dependent cleavage activity of amyloid precursor protein (APP). Activates MMP14/MT1-MMP-dependent cleavage activity. Plays a central role in retinal vascularization by regulating norrin (NDP) signal transduction. Acts in concert with norrin (NDP) to promote FZD4 multimerization and subsequent activation of FZD4, leading to promote accumulation of beta-catenin (CTNNB1) and stimulate LEF/TCF-mediated transcriptional programs. Suprisingly, it only activate the norrin (NDP)-dependent activation of FZD4, while it does not activate the Wnt-dependent activation of FZD4, suggesting the existence of a Wnt-independent signaling that also promote accumulation the beta-catenin (CTNNB1). The polypeptide is Tetraspanin-12 (Tspan12) (Mus musculus (Mouse)).